The sequence spans 983 residues: Protein CLASP-3 (983 aa).

2 disordered regions span residues 356-393 (YPNR…TQKA) and 666-690 (SNNI…QKES). Low complexity predominate over residues 359–372 (RPGSRTRTSSITST). An HEAT repeat occupies 918–956 (ITPTIIKAYQSTSSTVRKTVVYCLVAMVNRVGEQRMTPH).

This sequence belongs to the CLASP family.

It is found in the cytoplasm. The protein localises to the cytoskeleton. Microtubule plus-end tracking protein that promotes the stabilization of dynamic microtubules. This chain is Protein CLASP-3 (cls-3), found in Caenorhabditis elegans.